Consider the following 401-residue polypeptide: G2/mitotic-specific cyclin-B1 (401 aa).

Disordered stretches follow at residues 1-30 (MALR…PTLK) and 84-103 (KVQV…ETSG). Residues 9 to 26 (RLASTRAEQGGKTCSVSG) show a composition bias toward polar residues.

This sequence belongs to the cyclin family. Cyclin AB subfamily. As to quaternary structure, interacts with the CDK1 protein kinase to form a serine/threonine kinase holoenzyme complex also known as maturation promoting factor (MPF). The cyclin subunit imparts substrate specificity to the complex.

In terms of biological role, essential for the control of the cell cycle at the G2/M (mitosis) transition. The polypeptide is G2/mitotic-specific cyclin-B1 (ccnb1) (Oryzias javanicus (Javanese ricefish)).